Reading from the N-terminus, the 351-residue chain is Tryptophan--tRNA ligase (351 aa).

ATP-binding positions include 11-13 (RPT) and 19-20 (GH). Residues 12 to 20 (PTGALHLGH) carry the 'HIGH' region motif. Residue Asp-139 participates in L-tryptophan binding. ATP is bound by residues 151 to 153 (GRD), Leu-190, and 198 to 202 (KMSKS). The short motif at 198 to 202 (KMSKS) is the 'KMSKS' region element.

It belongs to the class-I aminoacyl-tRNA synthetase family. As to quaternary structure, homodimer.

The protein localises to the cytoplasm. It carries out the reaction tRNA(Trp) + L-tryptophan + ATP = L-tryptophyl-tRNA(Trp) + AMP + diphosphate + H(+). Catalyzes the attachment of tryptophan to tRNA(Trp). This chain is Tryptophan--tRNA ligase, found in Borreliella burgdorferi (strain ATCC 35210 / DSM 4680 / CIP 102532 / B31) (Borrelia burgdorferi).